The primary structure comprises 367 residues: Peptide chain release factor 2 (367 aa).

Q254 carries the N5-methylglutamine modification.

The protein belongs to the prokaryotic/mitochondrial release factor family. Post-translationally, methylated by PrmC. Methylation increases the termination efficiency of RF2.

The protein localises to the cytoplasm. Peptide chain release factor 2 directs the termination of translation in response to the peptide chain termination codons UGA and UAA. This Aromatoleum aromaticum (strain DSM 19018 / LMG 30748 / EbN1) (Azoarcus sp. (strain EbN1)) protein is Peptide chain release factor 2.